Here is a 628-residue protein sequence, read N- to C-terminus: Chaperone protein HtpG (628 aa).

Residues 1 to 337 are a; substrate-binding; sequence MSEKKYTFET…SADLPLNVSR (337 aa). A b region spans residues 338–554; the sequence is EILQHNKVID…DYGMSLHMQK (217 aa). Residues 555–628 are c; sequence MMEEAGQSFM…FVKLVNKYIR (74 aa).

It belongs to the heat shock protein 90 family. In terms of assembly, homodimer.

The protein localises to the cytoplasm. In terms of biological role, molecular chaperone. Has ATPase activity. In Francisella tularensis subsp. tularensis (strain WY96-3418), this protein is Chaperone protein HtpG.